Here is a 147-residue protein sequence, read N- to C-terminus: uncharacterized protein (147 aa).

The HTH marR-type domain occupies 1–137; sequence MRDNTIGSLI…LYELMTKVHK (137 aa). Positions 53-76 form a DNA-binding region, H-T-H motif; the sequence is QMELAEKVTVTQGGISRMLTRLEK.

This is an uncharacterized protein from Bacillus cereus (strain ATCC 10987 / NRS 248).